The chain runs to 231 residues: 5'-methylthioadenosine/S-adenosylhomocysteine nucleosidase (231 aa).

Catalysis depends on Glu12, which acts as the Proton acceptor. Substrate-binding positions include Gly78, Met153, and 174–175 (ME). The active-site Proton donor is the Asp198.

It belongs to the PNP/UDP phosphorylase family. MtnN subfamily.

It catalyses the reaction S-adenosyl-L-homocysteine + H2O = S-(5-deoxy-D-ribos-5-yl)-L-homocysteine + adenine. The catalysed reaction is S-methyl-5'-thioadenosine + H2O = 5-(methylsulfanyl)-D-ribose + adenine. The enzyme catalyses 5'-deoxyadenosine + H2O = 5-deoxy-D-ribose + adenine. It functions in the pathway amino-acid biosynthesis; L-methionine biosynthesis via salvage pathway; S-methyl-5-thio-alpha-D-ribose 1-phosphate from S-methyl-5'-thioadenosine (hydrolase route): step 1/2. In terms of biological role, catalyzes the irreversible cleavage of the glycosidic bond in both 5'-methylthioadenosine (MTA) and S-adenosylhomocysteine (SAH/AdoHcy) to adenine and the corresponding thioribose, 5'-methylthioribose and S-ribosylhomocysteine, respectively. Also cleaves 5'-deoxyadenosine, a toxic by-product of radical S-adenosylmethionine (SAM) enzymes, into 5-deoxyribose and adenine. The protein is 5'-methylthioadenosine/S-adenosylhomocysteine nucleosidase of Bacillus cytotoxicus (strain DSM 22905 / CIP 110041 / 391-98 / NVH 391-98).